We begin with the raw amino-acid sequence, 463 residues long: L-seryl-tRNA(Sec) selenium transferase (463 aa).

The residue at position 295 (Lys295) is an N6-(pyridoxal phosphate)lysine.

Belongs to the SelA family. In terms of assembly, homodecamer; pentamer of dimers. Binds only one seryl-tRNA(Sec) per dimer. Requires pyridoxal 5'-phosphate as cofactor.

It is found in the cytoplasm. The enzyme catalyses L-seryl-tRNA(Sec) + selenophosphate + H(+) = L-selenocysteinyl-tRNA(Sec) + phosphate. Its pathway is aminoacyl-tRNA biosynthesis; selenocysteinyl-tRNA(Sec) biosynthesis; selenocysteinyl-tRNA(Sec) from L-seryl-tRNA(Sec) (bacterial route): step 1/1. Converts seryl-tRNA(Sec) to selenocysteinyl-tRNA(Sec) required for selenoprotein biosynthesis. This Escherichia coli O17:K52:H18 (strain UMN026 / ExPEC) protein is L-seryl-tRNA(Sec) selenium transferase.